The primary structure comprises 126 residues: Holo-[acyl-carrier-protein] synthase (126 aa).

Mg(2+) contacts are provided by D9 and E57.

This sequence belongs to the P-Pant transferase superfamily. AcpS family. Mg(2+) serves as cofactor.

The protein localises to the cytoplasm. It carries out the reaction apo-[ACP] + CoA = holo-[ACP] + adenosine 3',5'-bisphosphate + H(+). Transfers the 4'-phosphopantetheine moiety from coenzyme A to a Ser of acyl-carrier-protein. The protein is Holo-[acyl-carrier-protein] synthase of Alteromonas mediterranea (strain DSM 17117 / CIP 110805 / LMG 28347 / Deep ecotype).